The primary structure comprises 224 residues: Elongation factor 1-beta 2 (224 aa).

N-acetylalanine is present on A2. In terms of domain architecture, GST C-terminal spans 14 to 65; the sequence is VKSVEEHLAGKTYISGDQLSVDDVKVYAAVPVKPSDAFPNASKWYESVASQL. The interval 89 to 139 is disordered; sequence EAEAPAAAADDDDDMDLFGDETEEEKKAAEEREAAKKDTKKPKESGKSSVL. Over residues 97-111 the composition is skewed to acidic residues; the sequence is ADDDDDMDLFGDETE. A compositionally biased stretch (basic and acidic residues) spans 112-134; sequence EEKKAAEEREAAKKDTKKPKESG.

It belongs to the EF-1-beta/EF-1-delta family. As to quaternary structure, EF-1 is composed of 4 subunits: alpha, beta (1B-alpha=beta'), delta (1B-beta), and gamma (1B-gamma).

Functionally, EF-1-beta and EF-1-delta stimulate the exchange of GDP bound to EF-1-alpha to GTP. In Arabidopsis thaliana (Mouse-ear cress), this protein is Elongation factor 1-beta 2.